The sequence spans 450 residues: tRNA-2-methylthio-N(6)-dimethylallyladenosine synthase (450 aa).

The region spanning 8–124 (RTLHITTWGC…LPELIAEIEA (117 aa)) is the MTTase N-terminal domain. 6 residues coordinate [4Fe-4S] cluster: Cys-17, Cys-52, Cys-87, Cys-162, Cys-166, and Cys-169. The Radical SAM core domain occupies 148 to 380 (ASQGPIAFLA…QAVLRDQQHA (233 aa)). Residues 383-445 (RAQVGRSFEV…PNSLMASLTQ (63 aa)) enclose the TRAM domain.

This sequence belongs to the methylthiotransferase family. MiaB subfamily. Monomer. [4Fe-4S] cluster serves as cofactor.

Its subcellular location is the cytoplasm. The enzyme catalyses N(6)-dimethylallyladenosine(37) in tRNA + (sulfur carrier)-SH + AH2 + 2 S-adenosyl-L-methionine = 2-methylsulfanyl-N(6)-dimethylallyladenosine(37) in tRNA + (sulfur carrier)-H + 5'-deoxyadenosine + L-methionine + A + S-adenosyl-L-homocysteine + 2 H(+). Its function is as follows. Catalyzes the methylthiolation of N6-(dimethylallyl)adenosine (i(6)A), leading to the formation of 2-methylthio-N6-(dimethylallyl)adenosine (ms(2)i(6)A) at position 37 in tRNAs that read codons beginning with uridine. In Acidiphilium cryptum (strain JF-5), this protein is tRNA-2-methylthio-N(6)-dimethylallyladenosine synthase.